We begin with the raw amino-acid sequence, 123 residues long: MKANSTKLSQLMKSVEIPFIKTEVPEIKVGDTIQLGLMVKEGSKTREQLCEGVVLARRRKKSLNTSLTLRCSFQGIGVERVFFLNSPRITFVKVIRRAKIRRAKLYYLRDLLGKAGRLKQIFN.

It belongs to the bacterial ribosomal protein bL19 family.

Its subcellular location is the plastid. The protein localises to the chloroplast. In Pyropia yezoensis (Susabi-nori), this protein is Large ribosomal subunit protein bL19c.